Consider the following 480-residue polypeptide: Prostacyclin synthase (480 aa).

The helical transmembrane segment at 1–21 (MMWTALLLVGLSILVIVLYGR) threads the bilayer. Residues R104, L110, N277, 338–339 (TR), and R362 contribute to the substrate site. C421 provides a ligand contact to heme.

This sequence belongs to the cytochrome P450 family. Requires heme as cofactor.

The protein resides in the endoplasmic reticulum membrane. The enzyme catalyses prostaglandin H2 = prostaglandin I2. It catalyses the reaction a hydroperoxyeicosatetraenoate = an oxoeicosatetraenoate + H2O. It carries out the reaction (15S)-hydroperoxy-(5Z,8Z,11Z,13E)-eicosatetraenoate = 15-oxo-(5Z,8Z,11Z,13E)-eicosatetraenoate + H2O. The catalysed reaction is (15S)-hydroperoxy-(5Z,8Z,11Z,13E)-eicosatetraenoate + AH2 = (15S)-hydroxy-(5Z,8Z,11Z,13E)-eicosatetraenoate + A + H2O. Functionally, catalyzes the isomerization of prostaglandin H2 to prostacyclin (= prostaglandin I2). Its function is as follows. Catalyzes the biosynthesis and metabolism of eicosanoids. Catalyzes the isomerization of prostaglandin H2 to prostacyclin (= prostaglandin I2), a potent mediator of vasodilation and inhibitor of platelet aggregation. Additionally, displays dehydratase activity, toward hydroperoxyeicosatetraenoates (HPETEs), especially toward (15S)-hydroperoxy-(5Z,8Z,11Z,13E)-eicosatetraenoate (15(S)-HPETE). The chain is Prostacyclin synthase from Danio rerio (Zebrafish).